Reading from the N-terminus, the 390-residue chain is Pyruvate dehydrogenase E1 component subunit alpha, somatic form, mitochondrial (390 aa).

A mitochondrion-targeting transit peptide spans 1–29; it reads MRKMLAAVSRVLSGVAQKPASRVLVASRH. Lysine 63 carries the N6-acetyllysine; alternate modification. Residue lysine 63 is modified to N6-succinyllysine; alternate. Residues histidine 92, tyrosine 118, arginine 119, alanine 157, glycine 165, valine 167, aspartate 196, glycine 197, alanine 198, asparagine 225, and tyrosine 227 each contribute to the pyruvate site. Tyrosine 118 and arginine 119 together coordinate thiamine diphosphate. Residues glycine 165, valine 167, aspartate 196, glycine 197, alanine 198, and asparagine 225 each contribute to the thiamine diphosphate site. Aspartate 196 is a binding site for Mg(2+). 2 residues coordinate Mg(2+): asparagine 225 and tyrosine 227. At serine 232 the chain carries Phosphoserine; by PDK1. Lysine 244 carries the N6-acetyllysine; alternate modification. At lysine 244 the chain carries N6-succinyllysine; alternate. Lysine 267 carries the N6-acetyllysine modification. Lysine 277 carries the N6-succinyllysine modification. Residue histidine 292 participates in thiamine diphosphate binding. A Phosphoserine; by PDK1, PDK2, PDK3 and PDK4 modification is found at serine 293. Position 295 is a phosphoserine (serine 295). Serine 300 is modified (phosphoserine; by PDK1, PDK2, PDK3 and PDK4). Position 301 is a phosphotyrosine (tyrosine 301). Position 313 is an N6-acetyllysine; alternate (lysine 313). Position 313 is an N6-succinyllysine; alternate (lysine 313). N6-acetyllysine is present on residues lysine 321 and lysine 336. Lysine 385 is modified (N6-succinyllysine).

Heterotetramer of two PDHA1 and two PDHB subunits. The heterotetramer interacts with DLAT, and is part of the multimeric pyruvate dehydrogenase complex that contains multiple copies of pyruvate dehydrogenase (E1), dihydrolipoamide acetyltransferase (DLAT, E2) and lipoamide dehydrogenase (DLD, E3). These subunits are bound to an inner core composed of about 48 DLAT and 12 PDHX molecules. Thiamine diphosphate is required as a cofactor. It depends on Mg(2+) as a cofactor. In terms of processing, phosphorylation at Ser-232, Ser-293 and Ser-300 by PDK family kinases inactivates the enzyme; for this phosphorylation at a single site is sufficient. Phosphorylation at Ser-293 interferes with access to active site, and thereby inactivates the enzyme. Dephosphorylation at all three sites, i.e. at Ser-232, Ser-293 and Ser-300, is required for reactivation. Acetylation alters the phosphorylation pattern. Deacetylated by SIRT3.

It localises to the mitochondrion matrix. It carries out the reaction N(6)-[(R)-lipoyl]-L-lysyl-[protein] + pyruvate + H(+) = N(6)-[(R)-S(8)-acetyldihydrolipoyl]-L-lysyl-[protein] + CO2. Pyruvate dehydrogenase activity is inhibited by phosphorylation of PDHA1; it is reactivated by dephosphorylation. In terms of biological role, the pyruvate dehydrogenase complex catalyzes the overall conversion of pyruvate to acetyl-CoA and CO(2), and thereby links the glycolytic pathway to the tricarboxylic cycle. The chain is Pyruvate dehydrogenase E1 component subunit alpha, somatic form, mitochondrial (PDHA1) from Bos taurus (Bovine).